The primary structure comprises 495 residues: Cytochrome P450 monooxygenase FrzC (495 aa).

The chain crosses the membrane as a helical span at residues 8–28 (GLVVGLWVTYHILLGTYNVFF). Cysteine 437 provides a ligand contact to heme.

It belongs to the cytochrome P450 family. Heme is required as a cofactor.

The protein localises to the membrane. The catalysed reaction is (S,S)-2,5-di-(p-hydroxybenzyl)piperazine + reduced [NADPH--hemoprotein reductase] + O2 = (1S,4S)-4-[(4-hydroxyphenyl)methyl]-2,5-diazaspiro[bicyclo[3.2.1]octane-6,1'-cyclohexane]-2',5'-dien-4'-one + oxidized [NADPH--hemoprotein reductase] + 2 H2O + H(+). It functions in the pathway secondary metabolite biosynthesis. Functionally, cytochrome P450 monooxygenase; part of the gene cluster that mediates the biosynthesis of the alkaloid (-)-FR901483, a potent immunosuppressant that shows efficacy in animal models and a probable inhibitor of purine nucleotide biosynthesis by targeting phosphoribosylpyrophosphate amidotransferase (PPAT). Within the pathway, FrzC catalyzes the coupling between N10 and C1' to produce a 1,4-diazabicyclo[3.2.1]octane spiro-fused to a 2,5-cyclohexadienone. FrzC probably first catalyzes homolysis of the N-H bond to generate the N10 radical which is followed by an O-H abstraction to give the phenolic radical which can be delocalized to C1'. Radical coupling between N10 and C1' then forms. The biosynthesis of (-)-FR901483 starts with the condensation of two L-tyrosines to yield (S,S)-dityrosyl-piperazine. This process occurs in 3 steps with the non-canonical nonribosomal peptide synthetase FrzA catalyzing the reduction of L-tyrosine into L-tyrosinal, the spontaneous condensation of 2 L-tyrosinal units, and the subsequent reduction by the NmrA-like family domain-containing oxidoreductase FrzB. The cytochrome P450 monooxygenase FrzC then performs coupling between N10 and C1' to morph the piperazine into a 1,4-diazabicyclo[3.2.1]octane spiro-fused to a 2,5-cyclohexadienone. The dienone portion is further reduced to cyclohexanone by the flavin-dependent reductase FrzD. The methyltranserases (MTs) FrzE and FrzF are then involved in the methylation at the C10' amine and the C4 phenolic oxygen, respectively. The order of the two MTs appear to be interchangeable. Cleavage of the C9-N10' bond by the dioxygenase FrzG then leads to formation of a conjugated iminium. In addition to the oxidation of C9, an additional dehydrogenation between C7 and C8 can occur to give a likely shunt product. The next biosynthetic step is the intramolecular aldol condensation catalyzed by the newly identified aldolase FrzH to yield an aza-tricyclic product with the formation of a C9-C3' bond. The short-chain dehydrogenase/reductase FrzI then produces dephospho-(-)-FR901483 that is phosphorylated at C4'-OH into (-)-FR901483 by the phosphotransferase FrzJ. This is Cytochrome P450 monooxygenase FrzC from Cladobotryum sp.